A 586-amino-acid chain; its full sequence is MAHSAEPSSSLSFTSSPHLSNGSISHNLSCSGSESVPSLEVISLSKLSSSLEQLLIDPGCDYSDADIVVEGIPVGVHRCILASRSGFFRELFKREKGSSGKEDRPKYCMSDFLPYGDVGYEAFLVFLSYVYTGKLKPSPVEVSTCVHNVCAHDACRPAINFVVELMYAASIFQMPDLVSIFERRLLNFVGKALSDNVVPILLVAFHCQLNQLIDQCVDRVARSDIDDISLEKGLPDEVVKKIKILRRNYQQDSDPNLPPADPLHEKRIRRIHKALDSDDVELVKLLLTESNITLDEANALHYAAAYCDPKVVTEVLALGLADVNLRNSRGYTALHIAVMRKEPSIIVLLLTKGARASELTSDGQSAVSICRRLTRPKDYHSKTEQGQEANKDRICIDVLEREMRRNPMAGDASISSQIMPDDLHMELLNLENRVALARLFFPAEAKLAMVIAHAETSEFAAPSSSKGSSGNLMEVDLNETPTVQNKRLHSRLEALMKTVRLGRCYFPHCSEVLDKFIDDDLPHLFYLEPGSSDEQKVKRRRFMELKEEVQKAFDKDKAECNLSGLSSSSSTTSPEKIGANQKVREP.

The 77-residue stretch at 63 to 139 (SDADIVVEGI…VYTGKLKPSP (77 aa)) folds into the BTB domain. The C2HC NPR-type zinc-finger motif lies at 142-156 (VSTCVHNVCAHDACR). Residues Cys-145, Cys-150, His-152, and Cys-155 each coordinate Zn(2+). ANK repeat units lie at residues 266–296 (KRIR…TLDE), 298–325 (NALH…DVNL), and 329–358 (RGYT…RASE). Residues 388–522 (EANKDRICID…LDKFIDDDLP (135 aa)) are salicylic acid-binding core (SBC). Arg-433 provides a ligand contact to salicylate. Residues 561–586 (NLSGLSSSSSTTSPEKIGANQKVREP) form a disordered region. Low complexity predominate over residues 562 to 573 (LSGLSSSSSTTS).

This sequence belongs to the plant 'ANKYRIN-BTB/POZ' family. 'NPR1-like' subfamily. As to expression, highly expressed in leaves. Expressed at low levels in roots and stems.

The protein localises to the cytoplasm. Its subcellular location is the nucleus. The protein resides in the nuclear body. Its pathway is protein modification; protein ubiquitination. Functionally, salicylic acid (SA)-binding substrate-specific adapter of an E3 ubiquitin-protein ligase complex (CUL3-RBX1-BTB) which mediates the ubiquitination and subsequent proteasomal degradation of target proteins. Transcription cofactor that represses gene expression in the absence of salicylic acid (SA), when attached to negative cis-elements (W-box) with WRKY transcription factors, but stimulates gene expression upon activation by SA, when sumoylated and attached to positive cis-elements (as-1) with TGA transcription factors, thus confering immunity through a series of gene regulations ending in a significant increase in antimicrobial and defense genes expression. Probable component of the salicylic acid (SA) defense signaling pathway and pathogen-induced systemic acquired resistance (SAR). May be involved in disease resistance against fungal pathogens. May be involved in tolerance to salt and osmotic stresses. The polypeptide is BTB/POZ domain and ankyrin repeat-containing protein NPR1 (Malus hupehensis (Chinese crab apple)).